The sequence spans 539 residues: Phosphoenolpyruvate carboxykinase (ATP) (539 aa).

R64, Y206, and K212 together coordinate substrate. ATP is bound by residues K212, H231, and 247–255 (GLSGTGKTT). Mn(2+) contacts are provided by K212 and H231. Position 268 (D268) interacts with Mn(2+). Residues E296, R332, 448 to 449 (RI), and T454 contribute to the ATP site. Position 332 (R332) interacts with substrate.

Belongs to the phosphoenolpyruvate carboxykinase (ATP) family. In terms of assembly, monomer. The cofactor is Mn(2+).

The protein localises to the cytoplasm. The enzyme catalyses oxaloacetate + ATP = phosphoenolpyruvate + ADP + CO2. The protein operates within carbohydrate biosynthesis; gluconeogenesis. Its function is as follows. Involved in the gluconeogenesis. Catalyzes the conversion of oxaloacetate (OAA) to phosphoenolpyruvate (PEP) through direct phosphoryl transfer between the nucleoside triphosphate and OAA. The chain is Phosphoenolpyruvate carboxykinase (ATP) from Yersinia enterocolitica serotype O:8 / biotype 1B (strain NCTC 13174 / 8081).